The primary structure comprises 131 residues: QRFP-like peptide (131 aa).

The signal sequence occupies residues 1 to 25 (MGVRVMRSRICVIGLLVLMLTQSEA). The propeptide occupies 26 to 94 (YSFREKSWRT…DDGISPADKR (69 aa)). The disordered stretch occupies residues 48–131 (RRDGGDQAPS…RESRRSFGSD (84 aa)). Residues 97 to 106 (MLQQLAQQLK) show a composition bias toward polar residues. Phenylalanine 119 bears the Phenylalanine amide mark. Residues 120-131 (GKRESRRSFGSD) are compositionally biased toward basic and acidic residues. The propeptide occupies 123-131 (ESRRSFGSD).

The protein belongs to the RFamide neuropeptide family.

It localises to the secreted. In terms of biological role, ligand for the G-protein coupled receptor QRFPR. In Branchiostoma floridae (Florida lancelet), this protein is QRFP-like peptide.